A 622-amino-acid chain; its full sequence is E3 ubiquitin-protein ligase RNF12-A (622 aa).

Disordered regions lie at residues 1-26 (MESA…MDRL), 67-386 (RLQQ…ESER), and 473-514 (NANA…NSRG). Residues 11 to 21 (SIEQSESQRQS) show a composition bias toward low complexity. Polar residues-rich tracts occupy residues 110–138 (SVRQ…NPNS) and 147–163 (INVN…SLDQ). Positions 216-242 (RSPDQRRTRARTDRSRSPLHHAVDPPI) are enriched in basic and acidic residues. Positions 247–256 (HSSSQTVDTS) are enriched in polar residues. Residues 272-289 (SSQVQNSSSSNETEGSSR) show a composition bias toward low complexity. The span at 300-317 (VLGTEGQSQSTVHLSNPE) shows a compositional bias: polar residues. Over residues 318 to 331 (TRSSSQTPQTDSST) the composition is skewed to low complexity. The span at 332–341 (NAETTGTGQR) shows a compositional bias: polar residues. Basic and acidic residues predominate over residues 355–365 (RPGDYRQRDSI). Over residues 366 to 382 (ANRTRSRSQTPNNTVTY) the composition is skewed to polar residues. The segment at 568-609 (CSVCITEYTEGNKLRKLPCSHEYHIHCIDRWLSENSTCPICR) adopts an RING-type; atypical zinc-finger fold. Positions 619 to 622 (ESIV) match the PDZ-binding motif.

It belongs to the RNF12 family. In terms of assembly, forms homodimers through the C-terminal region. The N-terminus interacts with the homeobox of LIM/homeobox factor lhx1/lim1, with lhx3/lim3 and lhx5/lim5, and with the N-terminus of ldb1. In terms of tissue distribution, shows overlapping expression with lhx1/lim1 and ldb1 in the gastrula mesoderm, and expression overlaps with ldb1 throughout early embryogenesis. After gastrulation, expression is gradually restricted to tissues originated from the ectoderm, the neuroectoderm, neural crest and epidermis, and subsequently to the neural tube as well as the head and tailbud region.

The protein localises to the nucleus. It catalyses the reaction S-ubiquitinyl-[E2 ubiquitin-conjugating enzyme]-L-cysteine + [acceptor protein]-L-lysine = [E2 ubiquitin-conjugating enzyme]-L-cysteine + N(6)-ubiquitinyl-[acceptor protein]-L-lysine.. It participates in protein modification; protein ubiquitination. Acts as an E3 ubiquitin-protein ligase specific for ldb1, mediating ubiquitination and proteasome-dependent degradation of excess ldb1 in a RING-dependent manner. Does not degrade ldb1 bound to lhx1/lim1, nor lim1 itself and thus contributes to the establishment of proper ldb1-lhx1/lim1 stoichiometry and the formation of a ldb1-lhx1/lim1 complex. Interferes with Spemann organizer function and suppresses secondary axis formation induced by ldb1 and lhx1/lim1. The protein is E3 ubiquitin-protein ligase RNF12-A (rnf12-a) of Xenopus laevis (African clawed frog).